A 469-amino-acid polypeptide reads, in one-letter code: Adenosylhomocysteinase (469 aa).

Thr-63, Asp-139, and Glu-164 together coordinate substrate. Residue 165-167 (TTT) coordinates NAD(+). Substrate-binding residues include Lys-194 and Asp-198. NAD(+)-binding positions include Asn-199, 228–233 (GYGDVG), Glu-251, Asn-300, 321–323 (IGH), and Asn-375.

Belongs to the adenosylhomocysteinase family. Requires NAD(+) as cofactor.

The protein resides in the cytoplasm. The enzyme catalyses S-adenosyl-L-homocysteine + H2O = L-homocysteine + adenosine. The protein operates within amino-acid biosynthesis; L-homocysteine biosynthesis; L-homocysteine from S-adenosyl-L-homocysteine: step 1/1. Its function is as follows. May play a key role in the regulation of the intracellular concentration of adenosylhomocysteine. This chain is Adenosylhomocysteinase, found in Pseudomonas putida (strain ATCC 700007 / DSM 6899 / JCM 31910 / BCRC 17059 / LMG 24140 / F1).